The primary structure comprises 231 residues: UPF0758 protein RBAM_025090 (231 aa).

The 123-residue stretch at Val-109 to Leu-231 folds into the MPN domain. Residues His-180, His-182, and Asp-193 each coordinate Zn(2+). The JAMM motif signature appears at His-180–Asp-193.

It belongs to the UPF0758 family.

This is UPF0758 protein RBAM_025090 from Bacillus velezensis (strain DSM 23117 / BGSC 10A6 / LMG 26770 / FZB42) (Bacillus amyloliquefaciens subsp. plantarum).